The following is a 923-amino-acid chain: Tyrosine-protein kinase receptor torso (923 aa).

The first 20 residues, 1–20 (MLIFYAKYAFIFWFFVGSNQ), serve as a signal peptide directing secretion. Over 21–399 (GEMLLMDKIS…VLLSEGNMVK (379 aa)) the chain is Extracellular. 12 N-linked (GlcNAc...) asparagine glycosylation sites follow: asparagine 37, asparagine 63, asparagine 107, asparagine 142, asparagine 146, asparagine 287, asparagine 298, asparagine 314, asparagine 326, asparagine 342, asparagine 348, and asparagine 377. Residues 400–420 (LVLFIIVPICCILMLCSLTFC) form a helical membrane-spanning segment. At 421 to 923 (RRNRSEVQAL…EEELYLEPLN (503 aa)) the chain is on the cytoplasmic side. A Protein kinase domain is found at 475–874 (VLLQDVLGEG…TFSALKHRLG (400 aa)). Residues 481 to 489 (LGEGAFGLV) and lysine 502 each bind ATP. Serine 608 is subject to Phosphoserine. The segment at 656–687 (YIPKTAEAPKDRPKRKLKPQPKKDSKQDFKSD) is disordered. Positions 676–687 (PKKDSKQDFKSD) are enriched in basic and acidic residues. The active-site Proton acceptor is aspartate 741.

The protein belongs to the protein kinase superfamily. Tyr protein kinase family. The cofactor is Mg(2+). May be auto-phosphorylated on tyrosine residues.

The protein resides in the membrane. It carries out the reaction L-tyrosyl-[protein] + ATP = O-phospho-L-tyrosyl-[protein] + ADP + H(+). In terms of biological role, probable receptor tyrosine kinase which is required for determination of anterior and posterior terminal structures in the embryo. During postembryonic development, involved in the initiation of metamorphosis probably by inducing the production of ecdysone in response to prothoracicotropic hormone Ptth. Binding to Ptth stimulates activation of canonical MAPK signaling leading to ERK phosphorylation. This Drosophila melanogaster (Fruit fly) protein is Tyrosine-protein kinase receptor torso (tor).